A 76-amino-acid polypeptide reads, in one-letter code: uncharacterized protein (76 aa).

The protein to M.jannaschii MJ0857 N-terminal region.

This is an uncharacterized protein from Methanocaldococcus jannaschii (strain ATCC 43067 / DSM 2661 / JAL-1 / JCM 10045 / NBRC 100440) (Methanococcus jannaschii).